A 440-amino-acid chain; its full sequence is Homocitrate synthase, mitochondrial (440 aa).

A compositionally biased stretch (polar residues) spans 1–23 (MSENNEFQSVTESTTAPTTSNPY). Residues 1 to 27 (MSENNEFQSVTESTTAPTTSNPYGPNP) are disordered. A Pyruvate carboxyltransferase domain is found at 37 to 290 (FQLIDSTLRE…RSKYKLHKIR (254 aa)). Arg45 is a 2-oxoglutarate binding site. Glu46 lines the Mg(2+) pocket. His105, Arg165, and Thr199 together coordinate 2-oxoglutarate. Residues His226 and His228 each contribute to the Mg(2+) site. His323 serves as the catalytic Proton acceptor. Ser399 is modified (phosphoserine). Thr410 is subject to Phosphothreonine.

It belongs to the alpha-IPM synthase/homocitrate synthase family. Homocitrate synthase LYS20/LYS21 subfamily. It depends on Mg(2+) as a cofactor. Mn(2+) is required as a cofactor.

Its subcellular location is the mitochondrion. It catalyses the reaction acetyl-CoA + 2-oxoglutarate + H2O = (2R)-homocitrate + CoA + H(+). It participates in amino-acid biosynthesis; L-lysine biosynthesis via AAA pathway; L-alpha-aminoadipate from 2-oxoglutarate: step 1/5. Catalyzes the aldol-type condensation of 2-oxoglutarate with acetyl-CoA to yield homocitrate. Carries out the first step of the alpha-aminoadipate (AAA) lysine biosynthesis pathway. The polypeptide is Homocitrate synthase, mitochondrial (LYS21) (Saccharomyces cerevisiae (strain ATCC 204508 / S288c) (Baker's yeast)).